Here is a 230-residue protein sequence, read N- to C-terminus: uncharacterized protein (230 aa).

The N-terminal stretch at 1–21 (MARYDARLRGIGKAHACSAFA) is a signal peptide. Positions 47–190 (SASVQENFIA…TVQTSSSGDP (144 aa)) are disordered. A compositionally biased stretch (polar residues) spans 141 to 150 (PQSQTSANSQ). The span at 151–165 (KKPEIRCRERSKNAR) shows a compositional bias: basic and acidic residues. Positions 173-188 (AVATNEAETVQTSSSG) are enriched in polar residues.

It to R.meliloti RA0936 and y4aO.

This is an uncharacterized protein from Sinorhizobium fredii (strain NBRC 101917 / NGR234).